Reading from the N-terminus, the 143-residue chain is Large ribosomal subunit protein uL11 (143 aa).

This sequence belongs to the universal ribosomal protein uL11 family. As to quaternary structure, part of the ribosomal stalk of the 50S ribosomal subunit. Interacts with L10 and the large rRNA to form the base of the stalk. L10 forms an elongated spine to which L12 dimers bind in a sequential fashion forming a multimeric L10(L12)X complex. In terms of processing, one or more lysine residues are methylated.

Functionally, forms part of the ribosomal stalk which helps the ribosome interact with GTP-bound translation factors. The protein is Large ribosomal subunit protein uL11 of Nitrosomonas europaea (strain ATCC 19718 / CIP 103999 / KCTC 2705 / NBRC 14298).